The following is a 264-amino-acid chain: 3-methyl-2-oxobutanoate hydroxymethyltransferase (264 aa).

The Mg(2+) site is built by D45 and D84. 3-methyl-2-oxobutanoate contacts are provided by residues 45–46 (DS), D84, and K112. E114 is a Mg(2+) binding site. E181 functions as the Proton acceptor in the catalytic mechanism.

This sequence belongs to the PanB family. In terms of assembly, homodecamer; pentamer of dimers. It depends on Mg(2+) as a cofactor.

The protein resides in the cytoplasm. It catalyses the reaction 3-methyl-2-oxobutanoate + (6R)-5,10-methylene-5,6,7,8-tetrahydrofolate + H2O = 2-dehydropantoate + (6S)-5,6,7,8-tetrahydrofolate. Its pathway is cofactor biosynthesis; (R)-pantothenate biosynthesis; (R)-pantoate from 3-methyl-2-oxobutanoate: step 1/2. Functionally, catalyzes the reversible reaction in which hydroxymethyl group from 5,10-methylenetetrahydrofolate is transferred onto alpha-ketoisovalerate to form ketopantoate. This is 3-methyl-2-oxobutanoate hydroxymethyltransferase from Shewanella amazonensis (strain ATCC BAA-1098 / SB2B).